The following is a 250-amino-acid chain: tRNA pseudouridine synthase A (250 aa).

D52 serves as the catalytic Nucleophile. Substrate is bound at residue Y111.

It belongs to the tRNA pseudouridine synthase TruA family. In terms of assembly, homodimer.

The enzyme catalyses uridine(38/39/40) in tRNA = pseudouridine(38/39/40) in tRNA. Formation of pseudouridine at positions 38, 39 and 40 in the anticodon stem and loop of transfer RNAs. The sequence is that of tRNA pseudouridine synthase A from Methylorubrum extorquens (strain CM4 / NCIMB 13688) (Methylobacterium extorquens).